The primary structure comprises 605 residues: Sodium-independent sulfate anion transporter (605 aa).

At 1 to 50 the chain is on the extracellular side; sequence MPSSLKGLGQAWLSSSSMALSACCSVSAWQKRLPVLAWLPRYSLQWLKMD. The helical transmembrane segment at 51 to 71 threads the bilayer; it reads FIAGLSVGLTVIPQALAYAEV. A topological domain (cytoplasmic) is located at residue A72. The chain crosses the membrane as a helical span at residues 73–93; that stretch reads GLPPQYGLYSAFTGCFVYVFL. The Extracellular segment spans residues 94-98; sequence GTSRD. Residues 99–119 form a helical membrane-spanning segment; the sequence is VTLGPTAIMSLLVSFYTFHEP. Topologically, residues 120–122 are cytoplasmic; the sequence is AYA. Residues 123-143 traverse the membrane as a helical segment; it reads VLLTFLSGCIQLAMGLLHLGF. Residues 144 to 146 are Extracellular-facing; the sequence is LLD. Residues 147 to 167 traverse the membrane as a helical segment; it reads FISCPVIKGFTSAAAIIIGFG. Topologically, residues 168 to 196 are cytoplasmic; it reads QIKNLLGLHNIPRQFFLQVYHTFLSVGET. A helical membrane pass occupies residues 197 to 217; that stretch reads RLGDAILGLVCMVLLLVLKLM. Topologically, residues 218 to 249 are extracellular; that stretch reads RDRIPPVHPEMPLCVRLSCGLVWTTATARNAL. The helical transmembrane segment at 250 to 270 threads the bilayer; it reads VVSFAALVAYSFEVTGYQPFI. Topologically, residues 271-303 are cytoplasmic; it reads LTGEIAKGLPPVRVPPFSVTMANGTVSFTRMVQ. A helical membrane pass occupies residues 304 to 324; sequence DLGAGLAVVPLIGLLESIAVA. The Extracellular portion of the chain corresponds to 325–340; the sequence is KAFASQNDYHVDANQE. Residues 341-361 form a helical membrane-spanning segment; sequence LLAIGLTNMLGSFVSSYPITG. Residues 362–373 lie on the Cytoplasmic side of the membrane; the sequence is SFGRTAVNAQSG. The chain crosses the membrane as a helical span at residues 374–394; sequence VCTPAGGLVTGALVLLSLDYL. Over 395–397 the chain is Extracellular; sequence TSL. A helical membrane pass occupies residues 398–418; the sequence is FYYIPKAALAAVIIMAVVPLF. Over 419-447 the chain is Cytoplasmic; the sequence is DTKIFGMLWRVKRLDLLPLCATFLLCFWE. A helical transmembrane segment spans residues 448–468; it reads VQYGILAGTLVSTLFLLHFVA. Residues 469–605 are Extracellular-facing; sequence RPKTQVSEGP…PEHKVTLLTA (137 aa). One can recognise an STAS domain in the interval 479–582; sequence VLILQLASGL…EKAEQYVRQE (104 aa).

This sequence belongs to the SLC26A/SulP transporter (TC 2.A.53) family.

The protein localises to the cell membrane. Its subcellular location is the lysosome membrane. It localises to the apical cell membrane. The protein resides in the basolateral cell membrane. The enzyme catalyses hydrogencarbonate(in) + chloride(out) = hydrogencarbonate(out) + chloride(in). The catalysed reaction is sulfate(in) + H(+)(in) = sulfate(out) + H(+)(out). It carries out the reaction oxalate(in) + chloride(out) = oxalate(out) + chloride(in). Sodium-independent anion exchanger mediating bicarbonate, chloride, sulfate and oxalate transport. Exhibits sodium-independent sulfate anion transporter activity that may cooperate with SLC26A2 to mediate DIDS-sensitive sulfate uptake into high endothelial venules endothelial cells (HEVEC). In the kidney, mediates chloride-bicarbonate exchange, facilitating V-ATPase-mediated acid secretion. May function as a chloride channel, playing an important role in moderating chloride homeostasis and neuronal activity in the cerebellum. This Cavia porcellus (Guinea pig) protein is Sodium-independent sulfate anion transporter (Slc26a11).